The following is a 200-amino-acid chain: RNA-binding protein with multiple splicing 2 (200 aa).

Residues 22–99 (RTLFVSGLPV…QTLRLEFAKA (78 aa)) enclose the RRM domain. The interval 32 to 42 (DIKPRELYLLF) is important for homodimerization.

In terms of assembly, homodimer. Expressed in developing heart.

It localises to the cytoplasm. The protein localises to the nucleus. The protein resides in the stress granule. In terms of biological role, RNA-binding protein involved in the regulation of smooth muscle cell differentiation and proliferation in the gastrointestinal system. Binds NOG mRNA, the major inhibitor of the bone morphogenetic protein (BMP) pathway. Mediates an increase of NOG mRNA levels, thereby contributing to the negative regulation of BMP signaling pathway and promoting reversible dedifferentiation and proliferation of smooth muscle cells. Acts as a pre-mRNA alternative splicing regulator. Mediates ACTN1 and FLNB alternative splicing. Likely binds to mRNA tandem CAC trinucleotide or CA dinucleotide motifs. This chain is RNA-binding protein with multiple splicing 2, found in Gallus gallus (Chicken).